The primary structure comprises 525 residues: Glutamate--cysteine ligase (525 aa).

Belongs to the glutamate--cysteine ligase type 1 family. Type 1 subfamily.

The catalysed reaction is L-cysteine + L-glutamate + ATP = gamma-L-glutamyl-L-cysteine + ADP + phosphate + H(+). The protein operates within sulfur metabolism; glutathione biosynthesis; glutathione from L-cysteine and L-glutamate: step 1/2. This is Glutamate--cysteine ligase from Pseudomonas putida (strain W619).